Consider the following 279-residue polypeptide: MNSTMSDEPDALSVVNQLRDLAADPLNRRAIVQDQGCLPGLILFLDHPSPPVVHSALLALRYLAECRANREKMKGELGMMLSLQNVIQKTTTPGETKLLASEVYDILQSSNMSDMDNVNEMNYRRRKAQFFLGSTNKRAKTVVLHIDGLDDSSRRNLCEEALLKIKGVISFTFQMAVQRCVVRIRSDLKAEALATAIASTKVMKAQQVVKSESGEEMLVPFQDTPVEVEQNTDLPEYLPEDESPSKEQDKAVSRVGSHPEGAASWLSTAANFLSRSFYW.

The ARM repeat unit spans residues 36 to 78 (GCLPGLILFLDHPSPPVVHSALLALRYLAECRANREKMKGELG). Residues 236–257 (EYLPEDESPSKEQDKAVSRVGS) are disordered. The span at 243-252 (SPSKEQDKAV) shows a compositional bias: basic and acidic residues.

In terms of assembly, interacts with mitochondrial contact site and cristae organizing system (MICOS) complex components IMMT/MIC60 and MICOS10/MIC10. Interacts with mitochondrial outer membrane sorting assembly machinery (SAM) complex components SAMM50 and MTX1.

It localises to the cytoplasm. The protein localises to the mitochondrion. The protein resides in the mitochondrion outer membrane. Its function is as follows. In association with mitochondrial contact site and cristae organizing system (MICOS) complex components and mitochondrial outer membrane sorting assembly machinery (SAM) complex components may regulate mitochondrial dynamics playing a role in determining mitochondrial length, distribution and motility. The protein is Armadillo repeat-containing protein 1 (ARMC1) of Gallus gallus (Chicken).